We begin with the raw amino-acid sequence, 1499 residues long: Ubiquitinating/deubiquitinating enzyme SdeA (1499 aa).

Residues methionine 1–lysine 193 are deubiquitinase. Residues histidine 64 and aspartate 80 each act as for deubiquitinase activity in the active site. Catalysis depends on cysteine 118, which acts as the Nucleophile; for deubiquitinase activity. The segment at proline 760–threonine 1000 is mono-ADP-ribosyltransferase. NAD(+) is bound at residue arginine 766–glutamate 772. 5-glutamyl glutamate is present on glutamate 860. NAD(+) is bound at residue glutamate 862. Residues lysine 1059–leucine 1181 are a coiled coil.

The protein belongs to the SidE family. As to quaternary structure, interacts with IcmS. Post-translationally, is able to ubiquitinate itself, but this modification is not required to ubiquitinate Rab33b. Glutamylated at Glu-860 by SidJ; glutamylation inhibits SdeA activity to catalyze the production of ADP-ribosylated ubiquitin.

It is found in the secreted. It localises to the host cell. The catalysed reaction is L-arginyl-[protein] + NAD(+) = N(omega)-(ADP-D-ribosyl)-L-arginyl-[protein] + nicotinamide + H(+). Ubiquitination catalyzed by SdeA is insensitive to the cysteine alkylation agent maleimide, suggesting that a cysteine conjugation of ubiquitin does not form during the reaction. In terms of biological role, secreted effector that interferes with the host cell ubiquitin pathway and is required for intracellular bacterial replication. Catalyzes the ubiquitination of several mammalian Rab proteins (Rab33b, Rab1, Rab6a and Rab30) during L.pneumophila infection, without engaging the standard cellular enzyme cascade (E1 and E2). Transfers an ADP-ribose moiety from NAD to the 'Arg-42' residue of ubiquitin in a reaction that releases nicotinamide. The modified ubiquitin is subsequently transferred to serine residues of the substrate protein via a phosphoribose linker that results in the release of AMP. Cannot ubiquitinate the endosomal Rab5 or the cytoskeletal small GTPase Rac1. Also acts as a deubiquitinase (DUB), catalyzing the cleavage of three of the most abundant polyubiquitin chains ('Lys-11', 'Lys-48' and 'Lys-63') with a distinct preference for 'Lys-63' linkages; is thus able to efficiently remove 'Lys-63'-linked polyubiquitin chains from the phagosomal surface. Is also able to remove NEDD8 from neddylated proteins, but is unable to recognize SUMO. The DUB activity of SdeA is important for regulating the dynamics of ubiquitin association with the bacterial phagosome, but is dispensable for its role in intracellular bacterial replication. The protein is Ubiquitinating/deubiquitinating enzyme SdeA of Legionella pneumophila subsp. pneumophila (strain Philadelphia 1 / ATCC 33152 / DSM 7513).